Consider the following 218-residue polypeptide: Large ribosomal subunit protein uL3 (218 aa).

Belongs to the universal ribosomal protein uL3 family. In terms of assembly, part of the 50S ribosomal subunit. Forms a cluster with proteins L14 and L19.

Its function is as follows. One of the primary rRNA binding proteins, it binds directly near the 3'-end of the 23S rRNA, where it nucleates assembly of the 50S subunit. In Corynebacterium aurimucosum (strain ATCC 700975 / DSM 44827 / CIP 107346 / CN-1) (Corynebacterium nigricans), this protein is Large ribosomal subunit protein uL3.